The sequence spans 303 residues: Ribosomal RNA small subunit methyltransferase H (303 aa).

S-adenosyl-L-methionine-binding positions include 32 to 34 (GGH), aspartate 52, phenylalanine 78, aspartate 99, and glutamine 106.

Belongs to the methyltransferase superfamily. RsmH family.

The protein localises to the cytoplasm. The enzyme catalyses cytidine(1402) in 16S rRNA + S-adenosyl-L-methionine = N(4)-methylcytidine(1402) in 16S rRNA + S-adenosyl-L-homocysteine + H(+). Specifically methylates the N4 position of cytidine in position 1402 (C1402) of 16S rRNA. This chain is Ribosomal RNA small subunit methyltransferase H, found in Acinetobacter baylyi (strain ATCC 33305 / BD413 / ADP1).